We begin with the raw amino-acid sequence, 509 residues long: 5-hydroxytryptamine receptor (509 aa).

The Extracellular portion of the chain corresponds to 1 to 99 (MANFTFGDLA…YSHEHLVLTS (99 aa)). 6 N-linked (GlcNAc...) asparagine glycosylation sites follow: Asn3, Asn47, Asn58, Asn68, Asn72, and Asn78. A helical membrane pass occupies residues 100–122 (VILGLFVLCCIIGNCFVIAAVML). The Cytoplasmic segment spans residues 123–132 (ERSLHNVANY). A helical transmembrane segment spans residues 133-154 (LILSLAVADLMVAVLVMPLSVV). At 155–169 (SEISKVWFLHSEVCD) the chain is on the extracellular side. Cys168 and Cys246 are joined by a disulfide. A helical membrane pass occupies residues 170-191 (MWISVDVLCCTASILHLVAIAM). The Cytoplasmic portion of the chain corresponds to 192–210 (DRYWAVTSIDYIRRRSARR). Residues 211 to 233 (ILLMIMVVWIVALFISIPPLFGW) form a helical membrane-spanning segment. The Extracellular portion of the chain corresponds to 234–259 (RDPNNDPDKTGTCIISQDKGYTIFST). Residues 260-281 (VGAFYLPMLVMMIIYIRIWLVA) traverse the membrane as a helical segment. The Cytoplasmic segment spans residues 282–432 (RSRIRKDKFQ…LKRERKAART (151 aa)). A disordered region spans residues 323–372 (SPDSTTEKKKRRAPFKSYGCSPRPERKKNRAKKLPENANGVNSNSSSSER). A helical membrane pass occupies residues 433 to 456 (LAIITGAFLICWLPFFIIALIGPF). Topologically, residues 457–465 (VDPEGIPPF) are extracellular. A helical transmembrane segment spans residues 466-488 (ARSFVLWLGYFNSLLNPIIYTIF). Residues 489-509 (SPEFRSAFQKILFGKYRRGHR) lie on the Cytoplasmic side of the membrane.

The protein belongs to the G-protein coupled receptor 1 family.

The protein localises to the cell membrane. This is a receptor for 5-hydroxytryptamine (serotonin), a biogenic hormone that function as a neurotransmitter, a hormone, and a mitogen. In Lymnaea stagnalis (Great pond snail), this protein is 5-hydroxytryptamine receptor.